The chain runs to 246 residues: UDP-N-acetyl-D-mannosaminuronic acid transferase (246 aa).

The protein belongs to the glycosyltransferase 26 family.

The catalysed reaction is UDP-N-acetyl-alpha-D-mannosaminouronate + N-acetyl-alpha-D-glucosaminyl-di-trans,octa-cis-undecaprenyl diphosphate = beta-D-ManNAcA-(1-&gt;4)-alpha-D-GlcNAc-di-trans,octa-cis-undecaprenyl diphosphate + UDP + H(+). It participates in bacterial outer membrane biogenesis; enterobacterial common antigen biosynthesis. Functionally, catalyzes the synthesis of Und-PP-GlcNAc-ManNAcA (Lipid II), the second lipid-linked intermediate involved in enterobacterial common antigen (ECA) synthesis. In Serratia proteamaculans (strain 568), this protein is UDP-N-acetyl-D-mannosaminuronic acid transferase.